Consider the following 338-residue polypeptide: tRNA N6-adenosine threonylcarbamoyltransferase (338 aa).

2 residues coordinate Fe cation: His111 and His115. Substrate-binding positions include 134 to 138, Asp167, Gly180, and Asn272; that span reads LVSGG. Asp300 provides a ligand contact to Fe cation.

Belongs to the KAE1 / TsaD family. It depends on Fe(2+) as a cofactor.

It is found in the cytoplasm. It carries out the reaction L-threonylcarbamoyladenylate + adenosine(37) in tRNA = N(6)-L-threonylcarbamoyladenosine(37) in tRNA + AMP + H(+). In terms of biological role, required for the formation of a threonylcarbamoyl group on adenosine at position 37 (t(6)A37) in tRNAs that read codons beginning with adenine. Is involved in the transfer of the threonylcarbamoyl moiety of threonylcarbamoyl-AMP (TC-AMP) to the N6 group of A37, together with TsaE and TsaB. TsaD likely plays a direct catalytic role in this reaction. The polypeptide is tRNA N6-adenosine threonylcarbamoyltransferase (Vibrio atlanticus (strain LGP32) (Vibrio splendidus (strain Mel32))).